The sequence spans 201 residues: MEKFTVLEGVAAPLKLVNVDTDMIIPKQYLKTIKRTGLGTGLFSEMRYKDDGSDNPDFVLNQSAYKNAKILVAGDNFGCGSSREHAPWALLDFGIRCVISTSFADIFYNNCFKNGILPVVVSKEDLDKLFDDADRGANATLTIDLPAQEIRGPDGGVVKFEIDPFRKRCLIEGLDDIGLTLEKAPAIAAYETAKGAEQPWL.

The protein belongs to the LeuD family. LeuD type 1 subfamily. Heterodimer of LeuC and LeuD.

It carries out the reaction (2R,3S)-3-isopropylmalate = (2S)-2-isopropylmalate. It participates in amino-acid biosynthesis; L-leucine biosynthesis; L-leucine from 3-methyl-2-oxobutanoate: step 2/4. Functionally, catalyzes the isomerization between 2-isopropylmalate and 3-isopropylmalate, via the formation of 2-isopropylmaleate. This Xanthobacter autotrophicus (strain ATCC BAA-1158 / Py2) protein is 3-isopropylmalate dehydratase small subunit.